The chain runs to 158 residues: NAD(P)H-quinone oxidoreductase subunit J, chloroplastic (158 aa).

The protein belongs to the complex I 30 kDa subunit family. NDH is composed of at least 16 different subunits, 5 of which are encoded in the nucleus.

It localises to the plastid. The protein localises to the chloroplast thylakoid membrane. The catalysed reaction is a plastoquinone + NADH + (n+1) H(+)(in) = a plastoquinol + NAD(+) + n H(+)(out). The enzyme catalyses a plastoquinone + NADPH + (n+1) H(+)(in) = a plastoquinol + NADP(+) + n H(+)(out). Its function is as follows. NDH shuttles electrons from NAD(P)H:plastoquinone, via FMN and iron-sulfur (Fe-S) centers, to quinones in the photosynthetic chain and possibly in a chloroplast respiratory chain. The immediate electron acceptor for the enzyme in this species is believed to be plastoquinone. Couples the redox reaction to proton translocation, and thus conserves the redox energy in a proton gradient. The chain is NAD(P)H-quinone oxidoreductase subunit J, chloroplastic from Lotus japonicus (Lotus corniculatus var. japonicus).